The primary structure comprises 131 residues: CDGSH iron-sulfur domain-containing protein 2 homolog A (131 aa).

Residues 1–35 (MEFLSKIVRVHIPDYLNSVPVPDSFGGFLDLTAGQ) are Lumenal-facing. A helical membrane pass occupies residues 36 to 58 (WLHLFAFSGTVAAAVYMSVKPYL). Residues 59–131 (DKKDQKDQLV…GPLVLKRKDV (73 aa)) lie on the Cytoplasmic side of the membrane. [2Fe-2S] cluster contacts are provided by Cys95, Cys97, Cys106, and His110.

It belongs to the CISD protein family. CISD2 subfamily. The cofactor is [2Fe-2S] cluster.

The protein resides in the endoplasmic reticulum membrane. This is CDGSH iron-sulfur domain-containing protein 2 homolog A from Branchiostoma floridae (Florida lancelet).